The primary structure comprises 219 residues: Cysteine dioxygenase (219 aa).

Histidine 106, histidine 108, and histidine 166 together coordinate Fe cation. The 3'-(S-cysteinyl)-tyrosine (Cys-Tyr) cross-link spans 113–183 (CVMKILHGSL…NDFAISLHLY (71 aa)).

This sequence belongs to the cysteine dioxygenase family. Fe cation serves as cofactor. In terms of processing, the thioether cross-link between Cys-113 and Tyr-183 plays a structural role through stabilizing the Fe(2+) ion, and prevents the production of highly damaging free hydroxyl radicals by holding the oxygen radical via hydroxyl hydrogen.

It carries out the reaction L-cysteine + O2 = 3-sulfino-L-alanine + H(+). In terms of biological role, cysteine dioxygenase involved in sulfite formation from cysteine. Required for keratin degradation and plays an important role in filamentous growth and virulence. This is Cysteine dioxygenase from Arthroderma benhamiae (Trichophyton mentagrophytes).